A 269-amino-acid polypeptide reads, in one-letter code: Phosphonoacetaldehyde hydrolase (269 aa).

Catalysis depends on D10, which acts as the Nucleophile. 2 residues coordinate Mg(2+): D10 and A12. K52 functions as the Schiff-base intermediate with substrate in the catalytic mechanism. D186 is a binding site for Mg(2+).

Belongs to the HAD-like hydrolase superfamily. PhnX family. Homodimer. Mg(2+) is required as a cofactor.

The catalysed reaction is phosphonoacetaldehyde + H2O = acetaldehyde + phosphate + H(+). Its function is as follows. Involved in phosphonate degradation. The polypeptide is Phosphonoacetaldehyde hydrolase (Salmonella paratyphi A (strain ATCC 9150 / SARB42)).